A 670-amino-acid chain; its full sequence is UvrABC system protein B (670 aa).

Residues 26-183 enclose the Helicase ATP-binding domain; the sequence is EGLENGLAHQ…RRLSELQYSR (158 aa). Residue 39-46 participates in ATP binding; it reads GVTGSGKT. The Beta-hairpin signature appears at 92-115; it reads YYDYYQPEAYVPSSDTFIEKDASV. Positions 431–597 constitute a Helicase C-terminal domain; sequence QVDDLLSEIR…GLNKKIGDIL (167 aa). Positions 600–620 are disordered; sequence GQPSTRGKGKGRGGKVADTNN. In terms of domain architecture, UVR spans 630–665; the sequence is DQKIRELEAKMYTHAQNLEFEQAAELRDQVHQLRQQ.

The protein belongs to the UvrB family. As to quaternary structure, forms a heterotetramer with UvrA during the search for lesions. Interacts with UvrC in an incision complex.

The protein localises to the cytoplasm. In terms of biological role, the UvrABC repair system catalyzes the recognition and processing of DNA lesions. A damage recognition complex composed of 2 UvrA and 2 UvrB subunits scans DNA for abnormalities. Upon binding of the UvrA(2)B(2) complex to a putative damaged site, the DNA wraps around one UvrB monomer. DNA wrap is dependent on ATP binding by UvrB and probably causes local melting of the DNA helix, facilitating insertion of UvrB beta-hairpin between the DNA strands. Then UvrB probes one DNA strand for the presence of a lesion. If a lesion is found the UvrA subunits dissociate and the UvrB-DNA preincision complex is formed. This complex is subsequently bound by UvrC and the second UvrB is released. If no lesion is found, the DNA wraps around the other UvrB subunit that will check the other stand for damage. The sequence is that of UvrABC system protein B from Yersinia enterocolitica serotype O:8 / biotype 1B (strain NCTC 13174 / 8081).